Consider the following 205-residue polypeptide: Holliday junction branch migration complex subunit RuvA (205 aa).

The domain I stretch occupies residues 1–64; it reads MIGKLKGLID…EDQIKLFGFR (64 aa). Residues 65–143 form a domain II region; it reads SDLEREWFRL…AFASVDPAVV (79 aa). Residues 144-153 form a flexible linker region; sequence ALSGALDERS. The tract at residues 153–205 is domain III; it reads SAPRPVTDAISALVNLGYGQPQAAAAIASASRSAGEGAETAQLIKLGLKELSK.

The protein belongs to the RuvA family. In terms of assembly, homotetramer. Forms an RuvA(8)-RuvB(12)-Holliday junction (HJ) complex. HJ DNA is sandwiched between 2 RuvA tetramers; dsDNA enters through RuvA and exits via RuvB. An RuvB hexamer assembles on each DNA strand where it exits the tetramer. Each RuvB hexamer is contacted by two RuvA subunits (via domain III) on 2 adjacent RuvB subunits; this complex drives branch migration. In the full resolvosome a probable DNA-RuvA(4)-RuvB(12)-RuvC(2) complex forms which resolves the HJ.

It is found in the cytoplasm. Its function is as follows. The RuvA-RuvB-RuvC complex processes Holliday junction (HJ) DNA during genetic recombination and DNA repair, while the RuvA-RuvB complex plays an important role in the rescue of blocked DNA replication forks via replication fork reversal (RFR). RuvA specifically binds to HJ cruciform DNA, conferring on it an open structure. The RuvB hexamer acts as an ATP-dependent pump, pulling dsDNA into and through the RuvAB complex. HJ branch migration allows RuvC to scan DNA until it finds its consensus sequence, where it cleaves and resolves the cruciform DNA. This Rhodopseudomonas palustris (strain BisB18) protein is Holliday junction branch migration complex subunit RuvA.